The sequence spans 105 residues: Small ribosomal subunit protein eS10A (105 aa).

It belongs to the eukaryotic ribosomal protein eS10 family. In terms of assembly, component of the small ribosomal subunit (SSU). Mature yeast ribosomes consist of a small (40S) and a large (60S) subunit. The 40S small subunit contains 1 molecule of ribosomal RNA (18S rRNA) and 33 different proteins (encoded by 57 genes). The large 60S subunit contains 3 rRNA molecules (25S, 5.8S and 5S rRNA) and 46 different proteins (encoded by 81 genes). eS10 interacts with GCN1 (via middle region); this interaction is direct and promotes GCN2 kinase activity. Post-translationally, the N-terminus is not modified.

Its subcellular location is the cytoplasm. In terms of biological role, component of the ribosome, a large ribonucleoprotein complex responsible for the synthesis of proteins in the cell. The small ribosomal subunit (SSU) binds messenger RNAs (mRNAs) and translates the encoded message by selecting cognate aminoacyl-transfer RNA (tRNA) molecules. The large subunit (LSU) contains the ribosomal catalytic site termed the peptidyl transferase center (PTC), which catalyzes the formation of peptide bonds, thereby polymerizing the amino acids delivered by tRNAs into a polypeptide chain. The nascent polypeptides leave the ribosome through a tunnel in the LSU and interact with protein factors that function in enzymatic processing, targeting, and the membrane insertion of nascent chains at the exit of the ribosomal tunnel. eS10 plays a role as a positive regulator of the GCN2 kinase activity by stimulating GCN1-mediated GCN2 activation. The protein is Small ribosomal subunit protein eS10A of Saccharomyces cerevisiae (strain ATCC 204508 / S288c) (Baker's yeast).